We begin with the raw amino-acid sequence, 301 residues long: tRNA dimethylallyltransferase 1 (301 aa).

Residue glycine 11–threonine 18 participates in ATP binding. Residue threonine 13 to threonine 18 participates in substrate binding. The tract at residues aspartate 36–glutamine 39 is interaction with substrate tRNA.

This sequence belongs to the IPP transferase family. Monomer. Requires Mg(2+) as cofactor.

It catalyses the reaction adenosine(37) in tRNA + dimethylallyl diphosphate = N(6)-dimethylallyladenosine(37) in tRNA + diphosphate. In terms of biological role, catalyzes the transfer of a dimethylallyl group onto the adenine at position 37 in tRNAs that read codons beginning with uridine, leading to the formation of N6-(dimethylallyl)adenosine (i(6)A). The sequence is that of tRNA dimethylallyltransferase 1 from Bacteroides fragilis (strain YCH46).